The primary structure comprises 224 residues: Response regulator protein GraR (224 aa).

The 114-residue stretch at 2-115 (QILLVEDDNT…VLIAKLQAIY (114 aa)) folds into the Response regulatory domain. Aspartate 51 is modified (4-aspartylphosphate). The ompR/PhoB-type DNA-binding region spans 126 to 224 (KRTLTWQDAV…KVGKGYMAHE (99 aa)). A phosphothreonine mark is found at threonine 128, threonine 130, and threonine 149.

Interacts with GraX. Post-translationally, phosphorylated by GraS. Phosphorylated by Stk1; phosphorylation increases the DNA-binding activity of GraR.

It localises to the cytoplasm. In terms of biological role, member of the two-component regulatory system GraR/GraS involved in resistance against cationic antimicrobial peptides (CAMPs). Upon phosphorylation by GraS, functions as a transcription regulator by direct binding to promoter regions of target genes such as adhesins, exoproteins, transporters, toxins, and proteins involved in cell wall synthesis. Down-regulates the expression of many genes involved in RNA and amino acid synthesis or glycolysis. The chain is Response regulator protein GraR (graR) from Staphylococcus aureus (strain Mu50 / ATCC 700699).